A 580-amino-acid polypeptide reads, in one-letter code: 2-hydroxyacyl-CoA lyase 1 (580 aa).

Glu-47 serves as a coordination point for thiamine diphosphate. The segment at 413–494 (TMDIGRLCIP…FIVLNNNGVY (82 aa)) is thiamine pyrophosphate binding. Mg(2+) contacts are provided by Asp-463 and Asn-490.

Belongs to the TPP enzyme family. In terms of assembly, homotetramer. Requires Mg(2+) as cofactor. Thiamine diphosphate serves as cofactor.

It is found in the peroxisome. It carries out the reaction a 2-hydroxy-3-methyl fatty acyl-CoA = a 2-methyl-branched fatty aldehyde + formyl-CoA. It catalyses the reaction an (R)-2-hydroxy-long-chain-fatty acyl-CoA = a long-chain fatty aldehyde + formyl-CoA. The catalysed reaction is 2-hydroxy-3-methylhexadecanoyl-CoA = 2-methylpentadecanal + formyl-CoA. The enzyme catalyses 2-hydroxyoctadecanoyl-CoA = heptadecanal + formyl-CoA. Peroxisomal 2-OH acyl-CoA lyase involved in the cleavage (C1 removal) reaction in the fatty acid alpha-oxydation in a thiamine pyrophosphate (TPP)-dependent manner. Involved in the degradation of 3-methyl-branched fatty acids and the shortening of 2-hydroxy long-chain fatty acids. The protein is 2-hydroxyacyl-CoA lyase 1 (hacl1) of Dictyostelium discoideum (Social amoeba).